The following is a 163-amino-acid chain: Staphylokinase (163 aa).

The first 27 residues, 1-27 (MLKRSLLFLTVLLLLFSFSSITNEVSA), serve as a signal peptide directing secretion.

This sequence belongs to the staphylokinase family.

It is found in the secreted. Potent plasminogen activator that converts plasminogen into plasmin. It forms a 1:1 complex with plasmin, which in turn activates other plasminogen molecules. This is Staphylokinase from Staphylococcus phage S phi-C (Bacteriophage S phi-C).